Here is a 567-residue protein sequence, read N- to C-terminus: Proline--tRNA ligase (567 aa).

Belongs to the class-II aminoacyl-tRNA synthetase family. ProS type 1 subfamily. In terms of assembly, homodimer.

It is found in the cytoplasm. It catalyses the reaction tRNA(Pro) + L-proline + ATP = L-prolyl-tRNA(Pro) + AMP + diphosphate. Its function is as follows. Catalyzes the attachment of proline to tRNA(Pro) in a two-step reaction: proline is first activated by ATP to form Pro-AMP and then transferred to the acceptor end of tRNA(Pro). As ProRS can inadvertently accommodate and process non-cognate amino acids such as alanine and cysteine, to avoid such errors it has two additional distinct editing activities against alanine. One activity is designated as 'pretransfer' editing and involves the tRNA(Pro)-independent hydrolysis of activated Ala-AMP. The other activity is designated 'posttransfer' editing and involves deacylation of mischarged Ala-tRNA(Pro). The misacylated Cys-tRNA(Pro) is not edited by ProRS. This is Proline--tRNA ligase from Staphylococcus aureus (strain MRSA252).